Reading from the N-terminus, the 132-residue chain is uncharacterized protein (132 aa).

A signal peptide spans methionine 1–alanine 17. Low complexity predominate over residues serine 25–serine 39. The segment at serine 25 to arginine 79 is disordered.

This is an uncharacterized protein from Escherichia coli (strain K12).